The primary structure comprises 185 residues: Dihydrofolate reductase 1 (185 aa).

The DHFR domain occupies 8 to 185 (ELVLVVAADE…QASPRPLDDL (178 aa)).

Belongs to the dihydrofolate reductase family.

The enzyme catalyses (6S)-5,6,7,8-tetrahydrofolate + NADP(+) = 7,8-dihydrofolate + NADPH + H(+). It participates in cofactor biosynthesis; tetrahydrofolate biosynthesis; 5,6,7,8-tetrahydrofolate from 7,8-dihydrofolate: step 1/1. Functionally, key enzyme in folate metabolism. Catalyzes an essential reaction for de novo glycine and purine synthesis, and for DNA precursor synthesis. This is Dihydrofolate reductase 1 (folA1) from Haloarcula marismortui (strain ATCC 43049 / DSM 3752 / JCM 8966 / VKM B-1809) (Halobacterium marismortui).